Consider the following 448-residue polypeptide: Phosphoglucosamine mutase (448 aa).

S102 (phosphoserine intermediate) is an active-site residue. Mg(2+)-binding residues include S102, D242, D244, and D246. S102 is subject to Phosphoserine.

This sequence belongs to the phosphohexose mutase family. Requires Mg(2+) as cofactor. Activated by phosphorylation.

The catalysed reaction is alpha-D-glucosamine 1-phosphate = D-glucosamine 6-phosphate. In terms of biological role, catalyzes the conversion of glucosamine-6-phosphate to glucosamine-1-phosphate. The chain is Phosphoglucosamine mutase from Brevibacillus brevis (strain 47 / JCM 6285 / NBRC 100599).